A 783-amino-acid polypeptide reads, in one-letter code: Lon protease (783 aa).

The Lon N-terminal domain maps to 11–203 (IPVLPLRDVV…FLMGQMESEI (193 aa)). An ATP-binding site is contributed by 355-362 (GPPGVGKT). The 182-residue stretch at 591–772 (SNRIGQVTGL…DEVLKVALER (182 aa)) folds into the Lon proteolytic domain. Catalysis depends on residues Ser-678 and Lys-721.

It belongs to the peptidase S16 family. In terms of assembly, homohexamer. Organized in a ring with a central cavity.

The protein localises to the cytoplasm. The enzyme catalyses Hydrolysis of proteins in presence of ATP.. Its function is as follows. ATP-dependent serine protease that mediates the selective degradation of mutant and abnormal proteins as well as certain short-lived regulatory proteins. Required for cellular homeostasis and for survival from DNA damage and developmental changes induced by stress. Degrades polypeptides processively to yield small peptide fragments that are 5 to 10 amino acids long. Binds to DNA in a double-stranded, site-specific manner. Regulates swarmer cell differentiation of V.parahaemolyticus. The chain is Lon protease from Vibrio parahaemolyticus serotype O3:K6 (strain RIMD 2210633).